Here is a 393-residue protein sequence, read N- to C-terminus: Envelope glycoprotein D (393 aa).

The signal sequence occupies residues 1 to 25 (MGGAAARLGAVILFVVIVGLHGVRG). The tract at residues 25-57 (GKYALADASLKMADPNRFRGKDLPVLDQLTDPP) is interaction with TNFRSF14. Over 26–338 (KYALADASLK…PYHPPATPNN (313 aa)) the chain is Virion surface. Residue H64 coordinates Zn(2+). Disulfide bonds link C90–C213, C130–C226, and C142–C151. N118 and N145 each carry an N-linked (GlcNAc...) asparagine; by host glycan. D239 provides a ligand contact to Zn(2+). The segment at 260 to 304 (LKIAGWHGPRAPYTSTLLPPELPETPNATQPELAPEDPEDSALLE) is profusion. The interval 273–300 (TSTLLPPELPETPNATQPELAPEDPEDS) is disordered. N286 carries an N-linked (GlcNAc...) asparagine; by host glycan. Residues 339-363 (MGLIAGAVGGSLLAALVICGIVYWM) traverse the membrane as a helical segment. At 364–393 (RRRTRKAPKRIRLPHIREDDQPSSHQPLFY) the chain is on the intravirion side.

It belongs to the herpesviridae glycoprotein D family. Homodimer. Interacts with host receptor TNFRSF14. Interacts with host receptor NECTIN1. Interacts (via profusion domain) with gB; this interaction occurs in the absence of gH/gL. Interacts (via profusion domain) with gH/gL heterodimer; this interaction occurs in the absence of gB. Associates with the gB-gH/gL-gD complex. Interacts (via C-terminus) with UL11 tegument protein. Interacts with host RSAD2.

The protein resides in the virion membrane. Its subcellular location is the host Golgi apparatus. Its function is as follows. Envelope glycoprotein that binds to the host cell entry receptors NECTIN1, TNFRSF14/HVEM and 3-O-sulfated heparan sulfate, promoting the virus entry into host cells. May trigger fusion with host membrane, by recruiting the fusion machinery composed of gB and gH/gL. The sequence is that of Envelope glycoprotein D (gD) from Homo sapiens (Human).